Reading from the N-terminus, the 149-residue chain is Nucleoside diphosphate kinase (149 aa).

6 residues coordinate ATP: lysine 9, phenylalanine 57, arginine 85, threonine 91, arginine 102, and asparagine 112. Histidine 115 (pros-phosphohistidine intermediate) is an active-site residue.

This sequence belongs to the NDK family. Homotetramer. Mg(2+) is required as a cofactor.

The protein localises to the cytoplasm. It catalyses the reaction a 2'-deoxyribonucleoside 5'-diphosphate + ATP = a 2'-deoxyribonucleoside 5'-triphosphate + ADP. The catalysed reaction is a ribonucleoside 5'-diphosphate + ATP = a ribonucleoside 5'-triphosphate + ADP. Functionally, major role in the synthesis of nucleoside triphosphates other than ATP. The ATP gamma phosphate is transferred to the NDP beta phosphate via a ping-pong mechanism, using a phosphorylated active-site intermediate. The polypeptide is Nucleoside diphosphate kinase (Staphylococcus saprophyticus subsp. saprophyticus (strain ATCC 15305 / DSM 20229 / NCIMB 8711 / NCTC 7292 / S-41)).